We begin with the raw amino-acid sequence, 357 residues long: tRNA N6-adenosine threonylcarbamoyltransferase (357 aa).

Fe cation contacts are provided by H116 and H120. Residues L139–G143, D172, G185, and N284 contribute to the substrate site. D312 contributes to the Fe cation binding site.

The protein belongs to the KAE1 / TsaD family. The cofactor is Fe(2+).

It is found in the cytoplasm. The catalysed reaction is L-threonylcarbamoyladenylate + adenosine(37) in tRNA = N(6)-L-threonylcarbamoyladenosine(37) in tRNA + AMP + H(+). In terms of biological role, required for the formation of a threonylcarbamoyl group on adenosine at position 37 (t(6)A37) in tRNAs that read codons beginning with adenine. Is involved in the transfer of the threonylcarbamoyl moiety of threonylcarbamoyl-AMP (TC-AMP) to the N6 group of A37, together with TsaE and TsaB. TsaD likely plays a direct catalytic role in this reaction. The chain is tRNA N6-adenosine threonylcarbamoyltransferase from Synechococcus sp. (strain CC9902).